Consider the following 566-residue polypeptide: Erythroid membrane-associated protein (566 aa).

A signal peptide spans 1–29; sequence MERPSPCGSWLVGCLFTIAVFQPPVQVLG. One can recognise an Ig-like V-type domain in the interval 30–139; that stretch reads DAGKVYIAPL…SSREDNVTLQ (110 aa). At 30 to 246 the chain is on the extracellular side; it reads DAGKVYIAPL…PERGSLSSPA (217 aa). A disulfide bond links Cys47 and Cys123. Residues Asn135 and Asn214 are each glycosylated (N-linked (GlcNAc...) asparagine). A helical transmembrane segment spans residues 247–267; that stretch reads VALSVVLPVLGLLILLGIWLI. At 268–566 the chain is on the cytoplasmic side; the sequence is CKQKKSKEKL…ALKGLKVPSL (299 aa). The B30.2/SPRY domain maps to 311–509; the sequence is KLKRAAANAG…LIICTELQKS (199 aa). The residue at position 509 (Ser509) is a Phosphoserine.

It belongs to the immunoglobulin superfamily. BTN/MOG family. Glycosylated. In terms of tissue distribution, expressed in spleen and bone marrow.

Its subcellular location is the cell membrane. The protein resides in the cytoplasm. In terms of biological role, possible role as a cell-adhesion or receptor molecule of erythroid cells. In Mus musculus (Mouse), this protein is Erythroid membrane-associated protein (Ermap).